Consider the following 458-residue polypeptide: Alpha-2C adrenergic receptor (458 aa).

Residues 1–51 are Extracellular-facing; the sequence is MASPALAAALAAAAAEGPNGSDAGEWGSGGGANASGTDWVPPPGQYSAGAV. N-linked (GlcNAc...) asparagine glycans are attached at residues N19 and N33. A helical membrane pass occupies residues 52 to 76; the sequence is AGLAAVVGFLIVFTVVGNVLVVIAV. The Cytoplasmic portion of the chain corresponds to 77–88; that stretch reads LTSRALRAPQNL. A helical membrane pass occupies residues 89–114; the sequence is FLVSLASADILVATLVMPFSLANELM. The Extracellular portion of the chain corresponds to 115-124; sequence AYWYFGQVWC. C124 and C202 are joined by a disulfide. The chain crosses the membrane as a helical span at residues 125-147; that stretch reads GVYLALDVLFCTSSIVHLCAISL. Topologically, residues 148–168 are cytoplasmic; the sequence is DRYWSVTQAVEYNLKRTPRRV. Residues 169 to 191 form a helical membrane-spanning segment; sequence KATIVAVWLISAVISFPPLVSFY. Topologically, residues 192–207 are extracellular; sequence RRPDGAAYPQCGLNDE. The chain crosses the membrane as a helical span at residues 208–231; sequence TWYILSSCIGSFFAPCLIMGLVYA. The Cytoplasmic portion of the chain corresponds to 232 to 379; that stretch reads RIYRVAKLRT…QAREKRFTFV (148 aa). Residues 245 to 343 are disordered; it reads SEKRGPAGPD…SPGPGGRLSR (99 aa). A compositionally biased stretch (basic residues) spans 291–303; sequence RRRRRGALRRGGR. A helical transmembrane segment spans residues 380-403; that stretch reads LAVVMGVFVLCWFPFFFSYSLYGI. Residues 404-416 are Extracellular-facing; sequence CREACQLPEPLFK. A helical membrane pass occupies residues 417 to 437; that stretch reads FFFWIGYCNSSLNPVIYTVFN. The Cytoplasmic segment spans residues 438 to 458; the sequence is QDFRRSFKHILFRRRRRGFRQ.

This sequence belongs to the G-protein coupled receptor 1 family. Adrenergic receptor subfamily. ADRA2C sub-subfamily.

It is found in the cell membrane. In terms of biological role, alpha-2 adrenergic receptors mediate the catecholamine-induced inhibition of adenylate cyclase through the action of G proteins. The chain is Alpha-2C adrenergic receptor (Adra2c) from Mus musculus (Mouse).